Reading from the N-terminus, the 307-residue chain is DDRGK domain-containing protein 1 (307 aa).

The Lumenal portion of the chain corresponds to Met-1–Asp-2. A helical transmembrane segment spans residues Leu-3–Leu-23. The Cytoplasmic segment spans residues Gln-24–Ala-307. The tract at residues Glu-31–Arg-175 is disordered. The span at Arg-52–Val-83 shows a compositional bias: low complexity. Over residues Leu-107 to Arg-175 the composition is skewed to basic and acidic residues.

Belongs to the DDRGK1 family. As to quaternary structure, interacts with Atg9; the interaction is transient.

It is found in the endoplasmic reticulum membrane. Functionally, substrate adapter for ufmylation, the covalent attachment of the ubiquitin-like modifier UFM1 to substrate proteins. Required for ufmylation of Atg9; protects the nervous system during aging, possibly by stabilizing Atg9 and supporting its function. The sequence is that of DDRGK domain-containing protein 1 from Drosophila virilis (Fruit fly).